A 314-amino-acid polypeptide reads, in one-letter code: 2,3-dihydroxyphenylpropionate/2,3-dihydroxicinnamic acid 1,2-dioxygenase (314 aa).

His115 functions as the Proton donor in the catalytic mechanism. The active-site Proton acceptor is the His179.

This sequence belongs to the LigB/MhpB extradiol dioxygenase family. Homotetramer. It depends on Fe(2+) as a cofactor.

It carries out the reaction 3-(2,3-dihydroxyphenyl)propanoate + O2 = (2Z,4E)-2-hydroxy-6-oxonona-2,4-dienedioate + H(+). It catalyses the reaction (2E)-3-(2,3-dihydroxyphenyl)prop-2-enoate + O2 = (2Z,4E,7E)-2-hydroxy-6-oxonona-2,4,7-trienedioate + H(+). The protein operates within aromatic compound metabolism; 3-phenylpropanoate degradation. Functionally, catalyzes the non-heme iron(II)-dependent oxidative cleavage of 2,3-dihydroxyphenylpropionic acid and 2,3-dihydroxicinnamic acid into 2-hydroxy-6-ketononadienedioate and 2-hydroxy-6-ketononatrienedioate, respectively. This is 2,3-dihydroxyphenylpropionate/2,3-dihydroxicinnamic acid 1,2-dioxygenase from Cupriavidus pinatubonensis (strain JMP 134 / LMG 1197) (Cupriavidus necator (strain JMP 134)).